We begin with the raw amino-acid sequence, 324 residues long: AKTTPPSVYPLAPGSAAQTNSMVTLGCLVKGYFPEPVTVTWNSGSLSSGVHTFPAVLQSDLYTLSSSVTVPSSPRPSETVTCNVAHPASSTKVDKKIVPRDCGCKPCICTVPEVSSVFIFPPKPKDVLTITLTPKVTCVVVDISKDDPEVQFSWFVDDVEVHTAQTQPREEQFNSTFRSVSELPIMHQDWLNGKEFKCRVNSAAFPAPIEKTISKTKGRPKAPQVYTIPPPKEQMAKDKVSLTCMITDFFPEDITVEWQWNGQPAENYKNTQPIMNTNGSYFVYSKLNVQKSNWEAGNTFTCSVLHEGLHNHHTEKSLSHSPGK.

The interval Ala1–Ile97 is CH1. Cys27 and Cys82 form a disulfide bridge. A hinge region spans residues Val98 to Thr110. Positions Val111–Lys217 are CH2. 2 cysteine pairs are disulfide-bonded: Cys138-Cys198 and Cys244-Cys302. N-linked (GlcNAc...) asparagine glycosylation occurs at Asn174. Positions Gly218–Lys324 are CH3.

The protein resides in the secreted. The chain is Ig gamma-1 chain C region secreted form (Ighg1) from Mus musculus (Mouse).